The primary structure comprises 177 residues: GTP-dependent dephospho-CoA kinase (177 aa).

D48, V49, V50, D67, K69, and E124 together coordinate GTP.

Belongs to the GTP-dependent DPCK family.

The catalysed reaction is 3'-dephospho-CoA + GTP = GDP + CoA + H(+). It participates in cofactor biosynthesis; coenzyme A biosynthesis. Functionally, catalyzes the GTP-dependent phosphorylation of the 3'-hydroxyl group of dephosphocoenzyme A to form coenzyme A (CoA). This is GTP-dependent dephospho-CoA kinase from Pyrococcus furiosus (strain ATCC 43587 / DSM 3638 / JCM 8422 / Vc1).